Consider the following 192-residue polypeptide: Threonylcarbamoyl-AMP synthase (192 aa).

Residues threonine 5–aspartate 192 enclose the YrdC-like domain.

Belongs to the SUA5 family. TsaC subfamily.

It is found in the cytoplasm. It catalyses the reaction L-threonine + hydrogencarbonate + ATP = L-threonylcarbamoyladenylate + diphosphate + H2O. In terms of biological role, required for the formation of a threonylcarbamoyl group on adenosine at position 37 (t(6)A37) in tRNAs that read codons beginning with adenine. Catalyzes the conversion of L-threonine, HCO(3)(-)/CO(2) and ATP to give threonylcarbamoyl-AMP (TC-AMP) as the acyladenylate intermediate, with the release of diphosphate. This chain is Threonylcarbamoyl-AMP synthase, found in Acinetobacter baylyi (strain ATCC 33305 / BD413 / ADP1).